The chain runs to 302 residues: MPINIPVHLPAKQILESENIFVMDETRAFKQDIRPLNIVILNLMPKKIQTETQLLRMLGNSPLQVYFTFLIPSTHTPKNTSREHLDEFYTTFESIRHKKFDGMIITGAPIEHLAFEEVSYWKELQEILDWSKTNVTSTLHICWGAQAGLYHHYGIEKIKLAEKKFGVFEHLVKEKKERLVRGFDELYYVPHSRHTDINTEQLKNTPNLKVLSVSEEAGVCLIVSDDDKQVFLTGHPEYDTDTLKQEYERDLLKDDTVKKPVHYFIEDGDALVPVNRWKAHATLLFMNWLNYYVYQETPYVWE.

The active-site Acyl-thioester intermediate is cysteine 142. 2 residues coordinate substrate: lysine 163 and serine 192. Residue histidine 235 is the Proton acceptor of the active site. Glutamate 237 is an active-site residue. Arginine 249 lines the substrate pocket.

Belongs to the MetA family.

Its subcellular location is the cytoplasm. It catalyses the reaction L-homoserine + acetyl-CoA = O-acetyl-L-homoserine + CoA. It functions in the pathway amino-acid biosynthesis; L-methionine biosynthesis via de novo pathway; O-acetyl-L-homoserine from L-homoserine: step 1/1. Transfers an acetyl group from acetyl-CoA to L-homoserine, forming acetyl-L-homoserine. The protein is Homoserine O-acetyltransferase of Bacillus pumilus (strain SAFR-032).